The primary structure comprises 144 residues: Nucleoside diphosphate kinase (144 aa).

Positions 11, 59, 87, 93, 104, and 114 each coordinate ATP. H117 (pros-phosphohistidine intermediate) is an active-site residue.

This sequence belongs to the NDK family. As to quaternary structure, homotetramer. Requires Mg(2+) as cofactor.

Its subcellular location is the cytoplasm. It carries out the reaction a 2'-deoxyribonucleoside 5'-diphosphate + ATP = a 2'-deoxyribonucleoside 5'-triphosphate + ADP. It catalyses the reaction a ribonucleoside 5'-diphosphate + ATP = a ribonucleoside 5'-triphosphate + ADP. In terms of biological role, major role in the synthesis of nucleoside triphosphates other than ATP. The ATP gamma phosphate is transferred to the NDP beta phosphate via a ping-pong mechanism, using a phosphorylated active-site intermediate. In Coxiella burnetii (strain CbuG_Q212) (Coxiella burnetii (strain Q212)), this protein is Nucleoside diphosphate kinase.